We begin with the raw amino-acid sequence, 398 residues long: S-adenosylmethionine synthase (398 aa).

Residue histidine 15 participates in ATP binding. Residue aspartate 17 coordinates Mg(2+). Glutamate 43 lines the K(+) pocket. Residues glutamate 56 and glutamine 99 each coordinate L-methionine. The segment at 99 to 109 is flexible loop; it reads QSPDIAQGVDT. ATP contacts are provided by residues 175 to 177, 243 to 244, aspartate 252, 258 to 259, alanine 275, and lysine 279; these read DGK, RF, and RK. Residue aspartate 252 participates in L-methionine binding. Lysine 283 contacts L-methionine.

It belongs to the AdoMet synthase family. In terms of assembly, homotetramer; dimer of dimers. Mg(2+) serves as cofactor. K(+) is required as a cofactor.

The protein resides in the cytoplasm. The catalysed reaction is L-methionine + ATP + H2O = S-adenosyl-L-methionine + phosphate + diphosphate. Its pathway is amino-acid biosynthesis; S-adenosyl-L-methionine biosynthesis; S-adenosyl-L-methionine from L-methionine: step 1/1. Its function is as follows. Catalyzes the formation of S-adenosylmethionine (AdoMet) from methionine and ATP. The overall synthetic reaction is composed of two sequential steps, AdoMet formation and the subsequent tripolyphosphate hydrolysis which occurs prior to release of AdoMet from the enzyme. The polypeptide is S-adenosylmethionine synthase (Parafrankia sp. (strain EAN1pec)).